The sequence spans 157 residues: Ribosome maturation factor RimP (157 aa).

It belongs to the RimP family.

Its subcellular location is the cytoplasm. Its function is as follows. Required for maturation of 30S ribosomal subunits. The polypeptide is Ribosome maturation factor RimP (Thermus thermophilus (strain ATCC BAA-163 / DSM 7039 / HB27)).